Here is a 314-residue protein sequence, read N- to C-terminus: L-lactate dehydrogenase 2 (314 aa).

NAD(+) contacts are provided by residues valine 16, aspartate 37, lysine 42, tyrosine 68, and glycine 82–leucine 83. Substrate is bound by residues glutamine 85, arginine 91, and asparagine 123–aspartate 126. Residues alanine 121 to asparagine 123 and serine 146 each bind NAD(+). Aspartate 151–arginine 154 provides a ligand contact to substrate. Beta-D-fructose 1,6-bisphosphate-binding residues include arginine 156 and histidine 171. Histidine 178 serves as the catalytic Proton acceptor. Phosphotyrosine is present on tyrosine 223. Threonine 232 provides a ligand contact to substrate.

The protein belongs to the LDH/MDH superfamily. LDH family. Homotetramer.

It localises to the cytoplasm. It catalyses the reaction (S)-lactate + NAD(+) = pyruvate + NADH + H(+). It participates in fermentation; pyruvate fermentation to lactate; (S)-lactate from pyruvate: step 1/1. Its activity is regulated as follows. Allosterically activated by fructose 1,6-bisphosphate (FBP). Its function is as follows. Catalyzes the conversion of lactate to pyruvate. The protein is L-lactate dehydrogenase 2 of Bacillus anthracis.